We begin with the raw amino-acid sequence, 284 residues long: Urease accessory protein UreD (284 aa).

Belongs to the UreD family. As to quaternary structure, ureD, UreF and UreG form a complex that acts as a GTP-hydrolysis-dependent molecular chaperone, activating the urease apoprotein by helping to assemble the nickel containing metallocenter of UreC. The UreE protein probably delivers the nickel.

The protein resides in the cytoplasm. Its function is as follows. Required for maturation of urease via the functional incorporation of the urease nickel metallocenter. This chain is Urease accessory protein UreD, found in Bordetella bronchiseptica (strain ATCC BAA-588 / NCTC 13252 / RB50) (Alcaligenes bronchisepticus).